Consider the following 226-residue polypeptide: Exopolysaccharide production protein ExoY (226 aa).

A helical transmembrane segment spans residues 34–54; it reads VLAASVALLLFSPLFLLIMAL.

Belongs to the bacterial sugar transferase family.

The protein localises to the cell membrane. It functions in the pathway glycan metabolism; exopolysaccharide biosynthesis. Its function is as follows. Needed for the addition of the first sugar (galactose) to the isoprenoid carrier. May function as a sugar transferase. This chain is Exopolysaccharide production protein ExoY (exoY), found in Rhizobium meliloti (strain 1021) (Ensifer meliloti).